The following is a 382-amino-acid chain: D-galactonate dehydratase (382 aa).

A Mg(2+)-binding site is contributed by D183. H185 serves as the catalytic Proton donor. 2 residues coordinate Mg(2+): E209 and E235. The Proton acceptor role is filled by H285. The disordered stretch occupies residues 361–382 (NENPPDWRNPVWRHSDGSIAEW).

It belongs to the mandelate racemase/muconate lactonizing enzyme family. GalD subfamily. The cofactor is Mg(2+).

The catalysed reaction is D-galactonate = 2-dehydro-3-deoxy-D-galactonate + H2O. Its pathway is carbohydrate acid metabolism; D-galactonate degradation; D-glyceraldehyde 3-phosphate and pyruvate from D-galactonate: step 1/3. Functionally, catalyzes the dehydration of D-galactonate to 2-keto-3-deoxy-D-galactonate. In Xanthomonas axonopodis pv. citri (strain 306), this protein is D-galactonate dehydratase.